A 220-amino-acid polypeptide reads, in one-letter code: MTKGILGRKIGMTQVFGENGELIPVTVVEAKENVVLQKKTVEVDGYNAIQVGFEDKKAYKKDAKSNKYANKPAEGHAKKADAAPKRFIREFRNVDVDAYEVGQEVSVDTFVAGDVIDVTGVSKGKGFQGAIKRHGQSRGPMSHSSHFHRAPDSVGMASDASRVFKGQKMPGRMGGNTVTVQNLEVVQVDTENKVILVKGNVPGPKKGLVEIRTSIKKGNK.

Residues 127-155 are disordered; sequence FQGAIKRHGQSRGPMSHSSHFHRAPDSVG.

The protein belongs to the universal ribosomal protein uL3 family. As to quaternary structure, part of the 50S ribosomal subunit. Forms a cluster with proteins L14 and L19.

Functionally, one of the primary rRNA binding proteins, it binds directly near the 3'-end of the 23S rRNA, where it nucleates assembly of the 50S subunit. In Staphylococcus aureus (strain JH9), this protein is Large ribosomal subunit protein uL3.